We begin with the raw amino-acid sequence, 374 residues long: Potassium channel subfamily K member 9 (374 aa).

The Cytoplasmic segment spans residues 1–8 (MKRQNVRT). Residues 9-29 (LSLIICTFTYLLVGAAVFDAL) form a helical membrane-spanning segment. Over 30-88 (ESDYEMREEEKLKAEEIRLKGKYNISSEDYRQLELVIMQSEPHRAGVQWKFAGSFYFAI) the chain is Extracellular. N53 carries N-linked (GlcNAc...) asparagine glycosylation. The pore-forming intramembrane region spans 89-101 (TVITTIGYGHAAP). Residues 102-107 (GTDAGK) lie on the Extracellular side of the membrane. Residues 108–128 (AFCMFYAVLGIPLTLVMFQSL) traverse the membrane as a helical segment. Residues 129-158 (GERMNTFVKYLLKRIKKCCGMHSTDVSMEN) are Cytoplasmic-facing. A helical transmembrane segment spans residues 159–179 (MVTVGFFSCMGTLCIGAAAFS). At 180–194 (HYEEWSFFQAYYYCF) the chain is on the extracellular side. An intramembrane region (pore-forming) is located at residues 195-207 (ITLTTIGFGDYVA). Residues 208 to 218 (LQKNRALQKKP) lie on the Extracellular side of the membrane. The chain crosses the membrane as a helical span at residues 219–239 (LYVAFSFMYILVGLTVIGAFL). Topologically, residues 240 to 374 (NLVVLRFLTM…HRLMKRRKSI (135 aa)) are cytoplasmic.

Belongs to the two pore domain potassium channel (TC 1.A.1.8) family. Homodimer. May form heterodimers with other family members.

The protein resides in the cell membrane. PH-dependent, voltage-insensitive, background potassium channel protein. This Xenopus laevis (African clawed frog) protein is Potassium channel subfamily K member 9 (kcnk9).